Consider the following 150-residue polypeptide: 3-hydroxyacyl-[acyl-carrier-protein] dehydratase FabZ (150 aa).

Residue histidine 54 is part of the active site.

This sequence belongs to the thioester dehydratase family. FabZ subfamily.

It is found in the cytoplasm. It carries out the reaction a (3R)-hydroxyacyl-[ACP] = a (2E)-enoyl-[ACP] + H2O. In terms of biological role, involved in unsaturated fatty acids biosynthesis. Catalyzes the dehydration of short chain beta-hydroxyacyl-ACPs and long chain saturated and unsaturated beta-hydroxyacyl-ACPs. The polypeptide is 3-hydroxyacyl-[acyl-carrier-protein] dehydratase FabZ (Vibrio campbellii (strain ATCC BAA-1116)).